We begin with the raw amino-acid sequence, 244 residues long: Probable transcriptional regulatory protein Dgeo_2194 (244 aa).

Residues methionine 1–arginine 21 are disordered.

It belongs to the TACO1 family.

It is found in the cytoplasm. This is Probable transcriptional regulatory protein Dgeo_2194 from Deinococcus geothermalis (strain DSM 11300 / CIP 105573 / AG-3a).